A 435-amino-acid polypeptide reads, in one-letter code: Adenylosuccinate synthetase (435 aa).

Residues Gly13–Lys19 and Gly41–Thr43 contribute to the GTP site. Residue Asp14 is the Proton acceptor of the active site. Residues Asp14 and Gly41 each contribute to the Mg(2+) site. Residues Asp14–Lys17, Asn39–His42, Thr131, Arg145, Gln226, Thr241, and Arg309 contribute to the IMP site. His42 serves as the catalytic Proton donor. Thr305 to Arg311 provides a ligand contact to substrate. Residues Arg311, Lys337 to Asp339, and Ser419 to Gly421 each bind GTP.

This sequence belongs to the adenylosuccinate synthetase family. As to quaternary structure, homodimer. Requires Mg(2+) as cofactor.

The protein resides in the cytoplasm. The enzyme catalyses IMP + L-aspartate + GTP = N(6)-(1,2-dicarboxyethyl)-AMP + GDP + phosphate + 2 H(+). It participates in purine metabolism; AMP biosynthesis via de novo pathway; AMP from IMP: step 1/2. Its function is as follows. Plays an important role in the de novo pathway of purine nucleotide biosynthesis. Catalyzes the first committed step in the biosynthesis of AMP from IMP. This chain is Adenylosuccinate synthetase, found in Dechloromonas aromatica (strain RCB).